The sequence spans 312 residues: Tetraacyldisaccharide 4'-kinase (312 aa).

60-67 (IAGGSGKT) lines the ATP pocket.

Belongs to the LpxK family.

The enzyme catalyses a lipid A disaccharide + ATP = a lipid IVA + ADP + H(+). The protein operates within glycolipid biosynthesis; lipid IV(A) biosynthesis; lipid IV(A) from (3R)-3-hydroxytetradecanoyl-[acyl-carrier-protein] and UDP-N-acetyl-alpha-D-glucosamine: step 6/6. Functionally, transfers the gamma-phosphate of ATP to the 4'-position of a tetraacyldisaccharide 1-phosphate intermediate (termed DS-1-P) to form tetraacyldisaccharide 1,4'-bis-phosphate (lipid IVA). The chain is Tetraacyldisaccharide 4'-kinase from Helicobacter pylori (strain HPAG1).